A 534-amino-acid chain; its full sequence is Pentatricopeptide repeat-containing protein At2g20540 (534 aa).

11 PPR repeats span residues Ser-41 to Pro-71, Asn-72 to Leu-106, Asp-108 to Phe-142, His-143 to Arg-173, Asp-174 to Ser-208, Trp-209 to Pro-239, Asp-240 to Lys-274, Gln-275 to Lys-305, Asp-306 to Pro-340, Asn-341 to Asp-371, and Lys-377 to Lys-407. A type E motif region spans residues Ile-412–Asn-487. The type E(+) motif stretch occupies residues Asn-488–Asp-518.

This sequence belongs to the PPR family. PCMP-E subfamily.

The chain is Pentatricopeptide repeat-containing protein At2g20540 (PCMP-E78) from Arabidopsis thaliana (Mouse-ear cress).